Reading from the N-terminus, the 98-residue chain is Integration host factor subunit beta (98 aa).

The interval 59-98 (RTGRNPKTGESVTLPGKYVPHFKPGKEMRDRVNESIQSEG) is disordered. A compositionally biased stretch (basic and acidic residues) spans 82–91 (PGKEMRDRVN).

It belongs to the bacterial histone-like protein family. As to quaternary structure, heterodimer of an alpha and a beta chain.

This protein is one of the two subunits of integration host factor, a specific DNA-binding protein that functions in genetic recombination as well as in transcriptional and translational control. This chain is Integration host factor subunit beta, found in Saccharophagus degradans (strain 2-40 / ATCC 43961 / DSM 17024).